The chain runs to 362 residues: Carbamoyl phosphate synthase small chain (362 aa).

Residues 1 to 169 (MGKRLLILED…TKTAYPAPGV (169 aa)) are CPSase. The L-glutamine site is built by serine 46, glycine 220, and glycine 222. Residues 172-358 (NIVLVDFGLK…LELIDAFQLE (187 aa)) enclose the Glutamine amidotransferase type-1 domain. Catalysis depends on cysteine 247, which acts as the Nucleophile. L-glutamine contacts are provided by methionine 248, glutamine 251, asparagine 289, glycine 291, and tyrosine 292. Active-site residues include histidine 331 and aspartate 333.

Belongs to the CarA family. As to quaternary structure, composed of two chains; the small (or glutamine) chain promotes the hydrolysis of glutamine to ammonia, which is used by the large (or ammonia) chain to synthesize carbamoyl phosphate. Tetramer of heterodimers (alpha,beta)4.

The catalysed reaction is hydrogencarbonate + L-glutamine + 2 ATP + H2O = carbamoyl phosphate + L-glutamate + 2 ADP + phosphate + 2 H(+). The enzyme catalyses L-glutamine + H2O = L-glutamate + NH4(+). It participates in amino-acid biosynthesis; L-arginine biosynthesis; carbamoyl phosphate from bicarbonate: step 1/1. It functions in the pathway pyrimidine metabolism; UMP biosynthesis via de novo pathway; (S)-dihydroorotate from bicarbonate: step 1/3. Functionally, small subunit of the glutamine-dependent carbamoyl phosphate synthetase (CPSase). CPSase catalyzes the formation of carbamoyl phosphate from the ammonia moiety of glutamine, carbonate, and phosphate donated by ATP, constituting the first step of 2 biosynthetic pathways, one leading to arginine and/or urea and the other to pyrimidine nucleotides. The small subunit (glutamine amidotransferase) binds and cleaves glutamine to supply the large subunit with the substrate ammonia. The protein is Carbamoyl phosphate synthase small chain of Streptococcus mutans serotype c (strain ATCC 700610 / UA159).